The following is a 40-amino-acid chain: U1-ectatotoxin-Eb1a subunit A (40 aa).

It belongs to the ectatomin family. Ectatomin-Eq subfamily. As to quaternary structure, heterodimer of subunits A and B; disulfide-linked. As to expression, expressed by the venom gland.

The protein localises to the secreted. Its subcellular location is the target cell membrane. The chain is U1-ectatotoxin-Eb1a subunit A from Ectatomma brunneum (Ant).